The sequence spans 165 residues: MELHVRYEGDDDPEKCTARKLARFDLAALHRTGRETPAGVVLNPHAERALSPADDTDMLVALDCSWETAGRAMFEIDGEHRALPFLVAANPVNYGQPFQLNTVEAFAGALAILGRWERAEELLSKFTWGHTFLELNEEPLRRYADCEDSSEVVAVQQAYLDAGED.

S-adenosyl-L-methionine contacts are provided by T17, L62, L83, and T102.

Belongs to the TDD superfamily. TSR3 family.

Its subcellular location is the cytoplasm. It catalyses the reaction an N(1)-methylpseudouridine in rRNA + S-adenosyl-L-methionine = N(1)-methyl-N(3)-[(3S)-3-amino-3-carboxypropyl]pseudouridine in rRNA + S-methyl-5'-thioadenosine + H(+). Aminocarboxypropyltransferase that catalyzes the aminocarboxypropyl transfer on pseudouridine corresponding to position 914 in M.jannaschii 16S rRNA. It constitutes the last step in biosynthesis of the hypermodified N1-methyl-N3-(3-amino-3-carboxypropyl) pseudouridine (m1acp3-Psi). This is 16S rRNA aminocarboxypropyltransferase from Halobacterium salinarum (strain ATCC 700922 / JCM 11081 / NRC-1) (Halobacterium halobium).